The following is a 155-amino-acid chain: uncharacterized protein (155 aa).

Transmembrane regions (helical) follow at residues 25–45 (LPMGFIGITLFEIGILLFGWT), 50–70 (IFWFVPTIGSAIMGGGYIMTS), 91–111 (GVKIFQLLLGAIFPLFAESLF), and 118–138 (WGCTLLAFILLACGCSLPILF).

Belongs to the major facilitator superfamily. CAR1 family.

Its subcellular location is the membrane. This is an uncharacterized protein from Schizosaccharomyces pombe (strain 972 / ATCC 24843) (Fission yeast).